Here is a 523-residue protein sequence, read N- to C-terminus: Putative oxidoreductase TDA3 (523 aa).

The span at 157–172 (NSSLSSSGSSLKNDSA) shows a compositional bias: low complexity. A disordered region spans residues 157–189 (NSSLSSSGSSLKNDSASNEEEGSDIHVSSSVPS). Phosphoserine is present on residues Ser189, Ser204, and Ser306.

This sequence belongs to the TDA3 family. Interacts with BTN2.

The protein resides in the cytoplasm. It is found in the late endosome. Putative oxidoreductase that negatively regulates the retrieval of cargo from late endosomes to the Golgi. Regulates YIF1 and KEX2 localization. Required for fast DNA replication. The chain is Putative oxidoreductase TDA3 (TDA3) from Saccharomyces cerevisiae (strain ATCC 204508 / S288c) (Baker's yeast).